The sequence spans 623 residues: uncharacterized protein (623 aa).

Residues 24 to 51 are a coiled coil; sequence RALVQKDELAQASQDVEDMRDCYDSLLN. Disordered stretches follow at residues 148 to 170, 240 to 343, 362 to 393, 454 to 531, and 585 to 607; these read TRQR…QQLQ, FSGL…TTPP, ALPT…TKAI, SFSG…LGYS, and KKLG…PQAL. A compositionally biased stretch (acidic residues) spans 243-259; it reads LEDDDGDDEIENNENDG. The segment covering 328 to 343 has biased composition (polar residues); the sequence is VSQSAPLFPENRTTPP. A compositionally biased stretch (low complexity) spans 364–379; it reads PTPVETTRSPSSTTSP. Residues 384–393 show a composition bias toward polar residues; the sequence is VGSSNPTKAI. A compositionally biased stretch (low complexity) spans 484 to 495; the sequence is PVSKLPKVSSSP. Residues 496 to 506 are compositionally biased toward polar residues; that stretch reads TASPTFVSTPK. Residues 590–606 are compositionally biased toward pro residues; sequence PSPPLTPMSLIHPPPQA.

This is an uncharacterized protein from Arabidopsis thaliana (Mouse-ear cress).